The following is a 138-amino-acid chain: Putative pre-16S rRNA nuclease (138 aa).

It belongs to the YqgF nuclease family.

It localises to the cytoplasm. Could be a nuclease involved in processing of the 5'-end of pre-16S rRNA. This is Putative pre-16S rRNA nuclease from Helicobacter hepaticus (strain ATCC 51449 / 3B1).